The sequence spans 146 residues: uncharacterized protein (146 aa).

The region spanning 7-146 is the N-acetyltransferase domain; sequence LQINYKTDEL…EGHDILIWNP (140 aa).

This is an uncharacterized protein from Staphylococcus epidermidis (strain ATCC 12228 / FDA PCI 1200).